The primary structure comprises 291 residues: RPE-retinal G protein-coupled receptor (291 aa).

Residues 1–15 (MAESGTLPTGFGELE) are Extracellular-facing. The helical transmembrane segment at 16–36 (VLAVGTVLLVEALSGLSLNIL) threads the bilayer. Residues 37–52 (TILSFCKTPELRTPSH) are Cytoplasmic-facing. Residues 53-73 (LLVLSLALADSGISLNALVAA) form a helical membrane-spanning segment. The Extracellular segment spans residues 74–91 (TSSLLRRWPYGSEGCQAH). Cysteines 88 and 162 form a disulfide. A helical transmembrane segment spans residues 92-112 (GFQGFVTALASICSSAAVAWG). Residues 113-130 (RYHHFCTRSRLDWNTAVS) are Cytoplasmic-facing. The helical transmembrane segment at 131–151 (LVFFVWLSSAFWAALPLLGWG) threads the bilayer. Over 152–175 (HYDYEPLGTCCTLDYSRGDRNFTS) the chain is Extracellular. The N-linked (GlcNAc...) asparagine glycan is linked to Asn-172. Residues 176–196 (FLFTMAFFNFLLPLFITVVSY) form a helical membrane-spanning segment. The Cytoplasmic portion of the chain corresponds to 197 to 219 (RLMEQKLGKTSRPPVNTVLPART). Residues 220–240 (LLLGWGPYALLYLYATIADAT) form a helical membrane-spanning segment. The Extracellular segment spans residues 241–247 (SISPKLQ). A helical transmembrane segment spans residues 248-268 (MVPALIAKAVPTVNAMNYALG). N6-(retinylidene)lysine is present on Lys-255. At 269–291 (SEMVHRGIWQCLSPQRREHSREQ) the chain is on the cytoplasmic side.

Belongs to the G-protein coupled receptor 1 family. Opsin subfamily. Post-translationally, covalently binds all-trans- and 11-cis-retinal. Preferentially expressed at high levels in the retinal pigment epithelium (RPE) and Mueller cells of the neural retina.

It is found in the membrane. Its function is as follows. Receptor for all-trans- and 11-cis-retinal. Binds preferentially to the former and may catalyze the isomerization of the chromophore by a retinochrome-like mechanism. In Bos taurus (Bovine), this protein is RPE-retinal G protein-coupled receptor (RGR).